The sequence spans 471 residues: Meiosis-specific with OB domain-containing protein (471 aa).

A DNA-binding region (OB) is located at residues 167-272; it reads IINVLAAVKS…EANILLNFIR (106 aa).

This sequence belongs to the MEIOB family. As to quaternary structure, component of a multiprotein complex with RPA2 and SPATA22. Interacts with SPATA22. Interacts with the complex BRME1:HSF2BP:BRCA2.

It is found in the cytoplasm. The protein localises to the nucleus. It localises to the chromosome. Single-stranded DNA-binding protein required for homologous recombination in meiosis I. Required for double strand breaks (DSBs) repair and crossover formation and promotion of faithful and complete synapsis. Not required for the initial loading of recombinases but required to maintain a proper number of RAD51 and DMC1 foci after the zygotene stage. May act by ensuring the stabilization of recombinases, which is required for successful homology search and meiotic recombination. Displays Single-stranded DNA 3'-5' exonuclease activity in vitro. The sequence is that of Meiosis-specific with OB domain-containing protein (MEIOB) from Macaca fascicularis (Crab-eating macaque).